The sequence spans 291 residues: 33 kDa chaperonin (291 aa).

2 disulfide bridges follow: C229–C231 and C262–C265.

It belongs to the HSP33 family. Post-translationally, under oxidizing conditions two disulfide bonds are formed involving the reactive cysteines. Under reducing conditions zinc is bound to the reactive cysteines and the protein is inactive.

Its subcellular location is the cytoplasm. Functionally, redox regulated molecular chaperone. Protects both thermally unfolding and oxidatively damaged proteins from irreversible aggregation. Plays an important role in the bacterial defense system toward oxidative stress. The protein is 33 kDa chaperonin of Vibrio cholerae serotype O1 (strain ATCC 39315 / El Tor Inaba N16961).